The sequence spans 233 residues: Glyceraldehyde-3-phosphate dehydrogenase A, chloroplastic (233 aa).

D-glyceraldehyde 3-phosphate contacts are provided by residues 49–51 (SCT), threonine 80, arginine 95, 108–109 (TG), and arginine 131. Cysteine 50 (nucleophile) is an active-site residue. Position 213 (asparagine 213) interacts with NADP(+).

The protein belongs to the glyceraldehyde-3-phosphate dehydrogenase family. Tetramer of either four A chains (GAPDH 2) or two A and two B chains (GAPDH 1).

It localises to the plastid. The protein resides in the chloroplast. It carries out the reaction D-glyceraldehyde 3-phosphate + phosphate + NADP(+) = (2R)-3-phospho-glyceroyl phosphate + NADPH + H(+). It participates in carbohydrate biosynthesis; Calvin cycle. This Sinapis alba (White mustard) protein is Glyceraldehyde-3-phosphate dehydrogenase A, chloroplastic (GAPA).